Here is a 159-residue protein sequence, read N- to C-terminus: Large ribosomal subunit protein bL35c (159 aa).

Residues 1–86 (MAMASATATL…TSSPSFTVFA (86 aa)) constitute a chloroplast transit peptide.

Component of the chloroplast large ribosomal subunit (LSU). Mature 70S chloroplast ribosomes of higher plants consist of a small (30S) and a large (50S) subunit. The 30S small subunit contains 1 molecule of ribosomal RNA (16S rRNA) and 24 different proteins. The 50S large subunit contains 3 rRNA molecules (23S, 5S and 4.5S rRNA) and 33 different proteins.

Its subcellular location is the plastid. The protein localises to the chloroplast. In terms of biological role, component of the chloroplast ribosome (chloro-ribosome), a dedicated translation machinery responsible for the synthesis of chloroplast genome-encoded proteins, including proteins of the transcription and translation machinery and components of the photosynthetic apparatus. The chain is Large ribosomal subunit protein bL35c (RPL35) from Spinacia oleracea (Spinach).